Consider the following 188-residue polypeptide: mRNA transport factor GFD1 (188 aa).

A disordered region spans residues methionine 1 to serine 128. A compositionally biased stretch (basic residues) spans lysine 18–asparagine 28. Positions asparagine 29 to asparagine 44 are enriched in low complexity. The segment covering glycine 59 to proline 79 has biased composition (basic and acidic residues). A phosphoserine mark is found at serine 87, serine 106, and serine 111. Over residues proline 112 to serine 128 the composition is skewed to low complexity. Positions lysine 119–glutamate 164 form a coiled coil.

As to quaternary structure, interacts with GLE1, NUP42, NAB2, ZDS1 and probably DBP5. Forms a complex with GLE1 and NAB2.

It is found in the cytoplasm. The protein localises to the nucleus. Its subcellular location is the nuclear pore complex. The protein resides in the nucleus membrane. Functionally, high-copy suppressor of mutant alleles of ATP-dependent RNA helicase DBP5, which is involved in mRNA export from the nucleus. It may also play an important role in a late stage of NAB2-mRNA export. This is mRNA transport factor GFD1 (GFD1) from Saccharomyces cerevisiae (strain ATCC 204508 / S288c) (Baker's yeast).